Here is a 366-residue protein sequence, read N- to C-terminus: Methyltransferase phm5 (366 aa).

S-adenosyl-L-methionine-binding positions include 204–205, Asp-230, 255–256, Arg-273, and Arg-274; these read GG and SM.

The protein belongs to the class I-like SAM-binding methyltransferase superfamily. Cation-independent O-methyltransferase family.

The protein operates within secondary metabolite biosynthesis. Its function is as follows. Methyltransferase; part of the gene cluster that mediates the biosynthesis of the trans-fused decalin-containing tetramic acid phomasetin, the stereochemical opposite of the HIV-1 integrase inhibitor equisetin. The PKS module of phm1 together with the enoylreductase phm4 catalyze the formation of the polyketide unit which is then conjugated to L-serine by the condensation domain of the phm1 NRPS module. Activity of the Dieckmann cyclase domain (RED) of phm1 results in release of the Dieckmann product intermediate. The Diels-Alderase phm7 then uses the Dieckmann product of phm1 as substrate and catalyzes the Diels-Alder cycloaddition to form the decalin ring of N-desmethylphomasetin. N-desmethylphomasetin is further methylated to phomasetin by the methyltransferase phm5. The protein is Methyltransferase phm5 of Pyrenochaetopsis sp.